The primary structure comprises 330 residues: Putative ADP-ribosyl glycohydrolase L543 (330 aa).

It belongs to the ADP-ribosylglycohydrolase family.

The polypeptide is Putative ADP-ribosyl glycohydrolase L543 (Acanthamoeba polyphaga mimivirus (APMV)).